The following is a 221-amino-acid chain: Ubiquitin-conjugating enzyme E2 S (221 aa).

The region spanning 11-157 (QVLRLVYKEV…AHLLTEIHAM (147 aa)) is the UBC core domain. Cysteine 95 acts as the Glycyl thioester intermediate in catalysis. Residues 158–221 (GGTSGAPQEP…TDKKRALRRL (64 aa)) form a disordered region. The segment covering 193–206 (GTGTNNSNISNTNI) has biased composition (low complexity). Positions 208-221 (AKKKTDKKRALRRL) are enriched in basic residues.

This sequence belongs to the ubiquitin-conjugating enzyme family.

It carries out the reaction S-ubiquitinyl-[E1 ubiquitin-activating enzyme]-L-cysteine + [E2 ubiquitin-conjugating enzyme]-L-cysteine = [E1 ubiquitin-activating enzyme]-L-cysteine + S-ubiquitinyl-[E2 ubiquitin-conjugating enzyme]-L-cysteine.. It functions in the pathway protein modification; protein ubiquitination. Its function is as follows. Catalyzes the covalent attachment of ubiquitin to other proteins. Acts as an essential factor of the anaphase promoting complex/cyclosome (APC/C), a cell cycle-regulated ubiquitin ligase that controls progression through mitosis. Acts by specifically elongating 'Lys-11'-linked polyubiquitin chains initiated by the E2 enzyme ube2c/ubch10 on APC/C substrates, enhancing the degradation of APC/C substrates by the proteasome and promoting mitotic exit. This is Ubiquitin-conjugating enzyme E2 S (ube2s) from Danio rerio (Zebrafish).